A 472-amino-acid chain; its full sequence is Sporozoite surface protein P36p (472 aa).

An N-terminal signal peptide occupies residues 1 to 23 (MMKRRRIFMYYCFCFLLKYVAFS). N-linked (GlcNAc...) asparagine glycans are attached at residues Asn-24, Asn-29, Asn-93, Asn-112, and Asn-185. 6-Cys domains are found at residues 24 to 157 (NVTN…FKKM) and 160 to 299 (KIKG…TSKN). 5 disulfide bridges follow: Cys-64-Cys-138, Cys-81-Cys-136, Cys-164-Cys-188, Cys-202-Cys-281, and Cys-222-Cys-279. Residues Asn-295, Asn-306, Asn-383, Asn-396, Asn-400, and Asn-416 are each glycosylated (N-linked (GlcNAc...) asparagine). Positions 359–385 (KMDPSDEDESNENAHNGNRANKDANYS) are disordered. Ser-449 is lipidated: GPI-anchor amidated serine. Residues 450 to 472 (SSYYEVFNYFSIAFILIIHMLLW) constitute a propeptide, removed in mature form.

It localises to the cell surface. The protein localises to the cell membrane. Its function is as follows. Involved in sporozoite infection of hepatocytes and replication therein. The protein is Sporozoite surface protein P36p (P52) of Plasmodium berghei (strain Anka).